A 141-amino-acid chain; its full sequence is Arsenate reductase (141 aa).

Cysteine 12 functions as the Nucleophile; cysteine thioarsenate intermediate in the catalytic mechanism.

Belongs to the ArsC family.

It carries out the reaction [glutaredoxin]-dithiol + arsenate + glutathione + H(+) = glutathionyl-S-S-[glutaredoxin] + arsenite + H2O. In terms of biological role, involved in resistance to arsenate. Catalyzes the reduction of arsenate [As(V)] to arsenite [As(III)]. The sequence is that of Arsenate reductase from Escherichia coli (strain K12).